The sequence spans 23 residues: U1-poneritoxin-Da3b (23 aa).

It belongs to the non-disulfide-bridged peptide (NDBP) superfamily. Medium-length antimicrobial peptide (group 3) family. Ponericin-W subfamily. In terms of tissue distribution, expressed by the venom gland.

The protein localises to the secreted. The protein resides in the target cell membrane. Its function is as follows. May have antimicrobial properties, like most ant linear peptides. May act by disrupting the integrity of the bacterial cell membrane. The polypeptide is U1-poneritoxin-Da3b (Dinoponera australis (Giant neotropical hunting ant)).